Here is a 372-residue protein sequence, read N- to C-terminus: Tribbles homolog 1 (372 aa).

2 disordered regions span residues 1-23 (MRVG…ALLF) and 52-86 (ECSS…GSAP). The span at 59-75 (YLSPPGSPCSPQPPPAA) shows a compositional bias: pro residues. The Protein kinase domain maps to 91–338 (IADYLLLPLA…APEILLHPWF (248 aa)). The short motif at 355–360 (DQIVPE) is the COP1-binding element.

Belongs to the protein kinase superfamily. CAMK Ser/Thr protein kinase family. Tribbles subfamily. As to quaternary structure, monomer. Interacts (via protein kinase domain) with CEBPA. Interacts with COP1. In terms of tissue distribution, expressed in most human tissues with the highest levels in skeletal muscle, thyroid gland, pancreas, peripheral blood leukocytes, and bone marrow.

Functionally, adapter protein involved in protein degradation by interacting with COP1 ubiquitin ligase. The COP1-binding motif is masked by autoinhibitory interactions with the protein kinase domain. Serves to alter COP1 substrate specificity by directing the activity of COP1 toward CEBPA. Binds selectively the recognition sequence of CEBPA. Regulates myeloid cell differentiation by altering the expression of CEBPA in a COP1-dependent manner. Controls macrophage, eosinophil and neutrophil differentiation via the COP1-binding domain. Interacts with MAPK kinases and regulates activation of MAP kinases, but has no kinase activity. In Homo sapiens (Human), this protein is Tribbles homolog 1.